Consider the following 118-residue polypeptide: MTSSDTQNNKTLAAMKNFAEQYAKRTDTYFCSDLSVTAVVIEGLARHKEELGSPLCPCRHYEDKEAEVKNTFWNCPCVPMRERKECHCMLFLTPDNDFAGDAQDIPMETLEEVKASMA.

Cys56 provides a ligand contact to [4Fe-4S] cluster. Catalysis depends on Cys58, which acts as the Nucleophile. Cys58 and Cys88 are joined by a disulfide. Cys75, Cys77, and Cys86 together coordinate [4Fe-4S] cluster.

Belongs to the ferredoxin thioredoxin reductase beta subunit family. As to quaternary structure, heterodimer of subunit A (variable subunit) and subunit B (catalytic subunit). Heterodimeric FTR forms a complex with ferredoxin and thioredoxin. Requires [4Fe-4S] cluster as cofactor.

The enzyme catalyses [thioredoxin]-disulfide + 2 reduced [2Fe-2S]-[ferredoxin] + 2 H(+) = [thioredoxin]-dithiol + 2 oxidized [2Fe-2S]-[ferredoxin]. Its function is as follows. Catalytic subunit of the ferredoxin-thioredoxin reductase (FTR), which catalyzes the two-electron reduction of thioredoxins by the electrons provided by reduced ferredoxin. The polypeptide is Ferredoxin-thioredoxin reductase, catalytic chain (Synechocystis sp. (strain ATCC 27184 / PCC 6803 / Kazusa)).